Here is a 426-residue protein sequence, read N- to C-terminus: D-tagatose-1,6-bisphosphate aldolase subunit KbaZ (426 aa).

The protein belongs to the GatZ/KbaZ family. KbaZ subfamily. Forms a complex with KbaY.

Its pathway is carbohydrate metabolism; D-tagatose 6-phosphate degradation; D-glyceraldehyde 3-phosphate and glycerone phosphate from D-tagatose 6-phosphate: step 2/2. Functionally, component of the tagatose-1,6-bisphosphate aldolase KbaYZ that is required for full activity and stability of the Y subunit. Could have a chaperone-like function for the proper and stable folding of KbaY. When expressed alone, KbaZ does not show any aldolase activity. In Escherichia coli O157:H7, this protein is D-tagatose-1,6-bisphosphate aldolase subunit KbaZ.